We begin with the raw amino-acid sequence, 104 residues long: Large ribosomal subunit protein uL24 (104 aa).

It belongs to the universal ribosomal protein uL24 family. In terms of assembly, part of the 50S ribosomal subunit.

In terms of biological role, one of two assembly initiator proteins, it binds directly to the 5'-end of the 23S rRNA, where it nucleates assembly of the 50S subunit. One of the proteins that surrounds the polypeptide exit tunnel on the outside of the subunit. The chain is Large ribosomal subunit protein uL24 from Shigella dysenteriae serotype 1 (strain Sd197).